A 201-amino-acid chain; its full sequence is Adapter protein MecA 1 (201 aa).

The protein belongs to the MecA family. In terms of assembly, homodimer.

Its function is as follows. Enables the recognition and targeting of unfolded and aggregated proteins to the ClpC protease or to other proteins involved in proteolysis. Acts negatively in the development of competence by binding ComK and recruiting it to the ClpCP protease. When overexpressed, inhibits sporulation. Also involved in Spx degradation by ClpC. This is Adapter protein MecA 1 (mecA1) from Halalkalibacterium halodurans (strain ATCC BAA-125 / DSM 18197 / FERM 7344 / JCM 9153 / C-125) (Bacillus halodurans).